A 477-amino-acid chain; its full sequence is Stromelysin-1 (477 aa).

An N-terminal signal peptide occupies residues 1–17; that stretch reads MKNLPILLLLCVAACSA. Positions 18-99 are cleaved as a propeptide — activation peptide; the sequence is YPLDRSARDE…SRCGVPDVGH (82 aa). The short motif at 90-97 is the Cysteine switch element; it reads SRCGVPDV. Position 92 (cysteine 92) interacts with Zn(2+). N-linked (GlcNAc...) asparagine glycosylation occurs at asparagine 120. Ca(2+) contacts are provided by aspartate 124 and aspartate 158. Zn(2+)-binding residues include histidine 168 and aspartate 170. 4 residues coordinate Ca(2+): aspartate 175, glycine 176, glycine 178, and valine 180. Histidine 183 contributes to the Zn(2+) binding site. Ca(2+) contacts are provided by glycine 190, asparagine 192, and aspartate 194. A Zn(2+)-binding site is contributed by histidine 196. The Ca(2+) site is built by aspartate 198, aspartate 199, and glutamate 201. Position 218 (histidine 218) interacts with Zn(2+). Glutamate 219 is an active-site residue. Residues histidine 222 and histidine 228 each contribute to the Zn(2+) site. Positions 260 to 285 are disordered; it reads QSLYGPPPASPDSPVEPSEPEPPAPG. 4 Hemopexin repeats span residues 287 to 336, 337 to 383, 385 to 433, and 434 to 477; these read LAMC…WPSL, PSGI…GFPP, VRKI…FPGI, and DSKL…WFNC. The cysteines at positions 290 and 477 are disulfide-linked. A Ca(2+)-binding site is contributed by aspartate 297. Aspartate 389 and aspartate 438 together coordinate Ca(2+).

It belongs to the peptidase M10A family. Ca(2+) is required as a cofactor. The cofactor is Zn(2+).

It localises to the secreted. The protein localises to the extracellular space. It is found in the extracellular matrix. It catalyses the reaction Preferential cleavage where P1', P2' and P3' are hydrophobic residues.. Its function is as follows. Metalloproteinase with a rather broad substrate specificity that can degrade fibronectin, laminin, gelatins of type I, III, IV, and V; collagens III, IV, X, and IX, and cartilage proteoglycans. Activates different molecules including growth factors, plasminogen or other matrix metalloproteinases such as MMP9. Once released into the extracellular matrix (ECM), the inactive pro-enzyme is activated by the plasmin cascade signaling pathway. Also acts intracellularly. For example, in dopaminergic neurons, gets activated by the serine protease HTRA2 upon stress and plays a pivotal role in DA neuronal degeneration by mediating microglial activation and alpha-synuclein/SNCA cleavage. In addition, plays a role in immune response and possesses antiviral activity against various viruses. Mechanistically, translocates from the cytoplasm into the cell nucleus upon virus infection to influence NF-kappa-B activities. This is Stromelysin-1 (MMP3) from Equus caballus (Horse).